A 232-amino-acid chain; its full sequence is Glutathione-specific gamma-glutamylcyclotransferase (232 aa).

10–15 (VLGYGS) is a binding site for substrate. The active-site Proton acceptor is Glu115.

The protein belongs to the gamma-glutamylcyclotransferase family. ChaC subfamily.

The protein localises to the cytoplasm. It localises to the nucleus. It carries out the reaction glutathione = L-cysteinylglycine + 5-oxo-L-proline. Catalyzes the cleavage of glutathione into 5-oxo-L-proline and a Cys-Gly dipeptide. Acts specifically on glutathione, but not on other gamma-glutamyl peptides. Allows utilization of gluthathione through subsequent cleavage of the Cys-Gly dipeptide by Cys-Gly metallodipeptidase DUG1. In Saccharomyces cerevisiae (strain ATCC 204508 / S288c) (Baker's yeast), this protein is Glutathione-specific gamma-glutamylcyclotransferase.